The primary structure comprises 213 residues: Thymidylate kinase (213 aa).

10–17 (GIDGCGKT) is an ATP binding site.

It belongs to the thymidylate kinase family.

The enzyme catalyses dTMP + ATP = dTDP + ADP. Phosphorylation of dTMP to form dTDP in both de novo and salvage pathways of dTTP synthesis. The sequence is that of Thymidylate kinase from Synechococcus sp. (strain WH7803).